The primary structure comprises 146 residues: UPF0756 membrane protein PTH_1817 (146 aa).

Helical transmembrane passes span 6 to 26 (LLIG…ILLI), 46 to 66 (MGLT…KASW), 69 to 89 (IISS…ALAT), and 105 to 125 (IVFG…GIPV).

This sequence belongs to the UPF0756 family.

The protein localises to the cell membrane. The chain is UPF0756 membrane protein PTH_1817 from Pelotomaculum thermopropionicum (strain DSM 13744 / JCM 10971 / SI).